Consider the following 505-residue polypeptide: uncharacterized protein (505 aa).

The disordered stretch occupies residues 1 to 52; it reads MVDGSIHVPVQSHEGQHDNSSSLNEEIQTSQDPLGIVESYQESSTSDFDKSH. The segment covering 18–32 has biased composition (polar residues); sequence DNSSSLNEEIQTSQD. The next 10 membrane-spanning stretches (helical) occupy residues 141-161, 173-193, 208-228, 235-255, 265-285, 290-310, 326-346, 362-382, 389-409, and 415-435; these read FWIVFFLGQVLSLCITATNTF, AFQTFLVYALLTLVYTPYTVF, GWKYIIFAFFDVEGNYFVVLA, LSASLLDSWATVAVVILSFIF, ILGVVACIGGLVLLVVSDVIS, SAVNPGLGDGYMIIGATCYGV, VVIGQLSLYGSIISIIQTFIF, GYLAGFILVMFLLYSLAPILF, FYNISLLTSDFWSLVIGIHVF, and WLYPIAFVLIILGLFVYHVFV. Phosphoserine occurs at positions 463, 466, and 467.

Belongs to the SLC35F solute transporter family.

Its subcellular location is the golgi apparatus membrane. This is an uncharacterized protein from Schizosaccharomyces pombe (strain 972 / ATCC 24843) (Fission yeast).